The primary structure comprises 279 residues: MKSVTSLGVFGNPIAHSLSPRIHALFAQTRQDSINYQRYLSTPGHFPRRVAEFFRHGGQGANVTLPFKQQAASLVTKLSDRARLAGAVNTLIPYGNGLLLGDNTDGEGLIIDLKNKGLNVSERSLAVFGAGGSARGIIPLLLEQKPRCLYLVNRTAKKAEMLKSQLETLGLVAANRIQVRSSASEIDEPIDLLINATSSSLNGQRLTLPPLLSENASGYDLMYADQPTVFMEQLTQAGCKNVSDGFGMLIEQAASSYQLWMGDERPDTAFVMAEMRTPS.

Shikimate contacts are provided by residues 17–19 and T64; that span reads SLS. The active-site Proton acceptor is K68. D80 is an NADP(+) binding site. Positions 89 and 105 each coordinate shikimate. Residues 129–133, 153–158, and L221 each bind NADP(+); these read GAGGS and NRTAKK. Y223 contributes to the shikimate binding site. Residue G245 coordinates NADP(+).

The protein belongs to the shikimate dehydrogenase family. Homodimer.

It catalyses the reaction shikimate + NADP(+) = 3-dehydroshikimate + NADPH + H(+). It participates in metabolic intermediate biosynthesis; chorismate biosynthesis; chorismate from D-erythrose 4-phosphate and phosphoenolpyruvate: step 4/7. Involved in the biosynthesis of the chorismate, which leads to the biosynthesis of aromatic amino acids. Catalyzes the reversible NADPH linked reduction of 3-dehydroshikimate (DHSA) to yield shikimate (SA). The polypeptide is Shikimate dehydrogenase (NADP(+)) (Idiomarina loihiensis (strain ATCC BAA-735 / DSM 15497 / L2-TR)).